We begin with the raw amino-acid sequence, 252 residues long: 2-succinyl-6-hydroxy-2,4-cyclohexadiene-1-carboxylate synthase (252 aa).

This sequence belongs to the AB hydrolase superfamily. MenH family. In terms of assembly, monomer.

It carries out the reaction 5-enolpyruvoyl-6-hydroxy-2-succinyl-cyclohex-3-ene-1-carboxylate = (1R,6R)-6-hydroxy-2-succinyl-cyclohexa-2,4-diene-1-carboxylate + pyruvate. Its pathway is quinol/quinone metabolism; 1,4-dihydroxy-2-naphthoate biosynthesis; 1,4-dihydroxy-2-naphthoate from chorismate: step 3/7. It functions in the pathway quinol/quinone metabolism; menaquinone biosynthesis. Its function is as follows. Catalyzes a proton abstraction reaction that results in 2,5-elimination of pyruvate from 2-succinyl-5-enolpyruvyl-6-hydroxy-3-cyclohexene-1-carboxylate (SEPHCHC) and the formation of 2-succinyl-6-hydroxy-2,4-cyclohexadiene-1-carboxylate (SHCHC). This is 2-succinyl-6-hydroxy-2,4-cyclohexadiene-1-carboxylate synthase from Salmonella schwarzengrund (strain CVM19633).